The sequence spans 370 residues: uncharacterized protein (370 aa).

The OBG-type G domain occupies alanine 62 to glycine 293. GTP is bound by residues glycine 68–serine 75, aspartate 114–leucine 118, and asparagine 243–aspartate 246. The TGS domain maps to glycine 293–alanine 368.

Belongs to the TRAFAC class OBG-HflX-like GTPase superfamily. OBG GTPase family.

This is an uncharacterized protein from Halobacterium salinarum (strain ATCC 700922 / JCM 11081 / NRC-1) (Halobacterium halobium).